A 428-amino-acid chain; its full sequence is Glutamate-1-semialdehyde 2,1-aminomutase 1 (428 aa).

Lysine 268 bears the N6-(pyridoxal phosphate)lysine mark.

This sequence belongs to the class-III pyridoxal-phosphate-dependent aminotransferase family. HemL subfamily. Homodimer. It depends on pyridoxal 5'-phosphate as a cofactor.

The protein resides in the cytoplasm. It carries out the reaction (S)-4-amino-5-oxopentanoate = 5-aminolevulinate. It functions in the pathway porphyrin-containing compound metabolism; protoporphyrin-IX biosynthesis; 5-aminolevulinate from L-glutamyl-tRNA(Glu): step 2/2. The sequence is that of Glutamate-1-semialdehyde 2,1-aminomutase 1 from Geobacillus kaustophilus (strain HTA426).